Consider the following 259-residue polypeptide: Deoxyribose-phosphate aldolase (259 aa).

The Proton donor/acceptor role is filled by aspartate 102. Lysine 167 functions as the Schiff-base intermediate with acetaldehyde in the catalytic mechanism. Catalysis depends on lysine 201, which acts as the Proton donor/acceptor.

The protein belongs to the DeoC/FbaB aldolase family. DeoC type 2 subfamily.

The protein resides in the cytoplasm. It carries out the reaction 2-deoxy-D-ribose 5-phosphate = D-glyceraldehyde 3-phosphate + acetaldehyde. It participates in carbohydrate degradation; 2-deoxy-D-ribose 1-phosphate degradation; D-glyceraldehyde 3-phosphate and acetaldehyde from 2-deoxy-alpha-D-ribose 1-phosphate: step 2/2. Functionally, catalyzes a reversible aldol reaction between acetaldehyde and D-glyceraldehyde 3-phosphate to generate 2-deoxy-D-ribose 5-phosphate. This is Deoxyribose-phosphate aldolase from Serratia proteamaculans (strain 568).